The sequence spans 462 residues: Exodeoxyribonuclease 7 large subunit (462 aa).

Belongs to the XseA family. In terms of assembly, heterooligomer composed of large and small subunits.

The protein resides in the cytoplasm. The catalysed reaction is Exonucleolytic cleavage in either 5'- to 3'- or 3'- to 5'-direction to yield nucleoside 5'-phosphates.. Functionally, bidirectionally degrades single-stranded DNA into large acid-insoluble oligonucleotides, which are then degraded further into small acid-soluble oligonucleotides. The sequence is that of Exodeoxyribonuclease 7 large subunit from Pectobacterium carotovorum subsp. carotovorum (strain PC1).